Consider the following 188-residue polypeptide: Apolipoprotein M (188 aa).

The segment at residues 1–22 (MFHQIWAALLYFYGIILNSIYQ) is a signal peptide (not cleaved). Intrachain disulfides connect Cys-23-Cys-167, Cys-95-Cys-183, and Cys-128-Cys-157. N-linked (GlcNAc...) asparagine glycosylation occurs at Asn-135. Tetradecanoate contacts are provided by Glu-136 and Arg-143.

Belongs to the calycin superfamily. Lipocalin family. Highly divergent. Interacts with LRP2; LRP2 mediates APOM renal uptake and subsequent lysosomal degradation. As to expression, plasma protein. Expressed in liver and kidney.

The protein localises to the secreted. Functionally, probably involved in lipid transport. Can bind sphingosine-1-phosphate, myristic acid, palmitic acid and stearic acid, retinol, all-trans-retinoic acid and 9-cis-retinoic acid. This is Apolipoprotein M (APOM) from Homo sapiens (Human).